A 138-amino-acid chain; its full sequence is Acidic phospholipase A2 DsM-a2/DsM-a2' (138 aa).

The N-terminal stretch at 1–16 (MRTLWIVAVCLIGVEG) is a signal peptide. Disulfide bonds link Cys42–Cys131, Cys44–Cys60, Cys59–Cys111, Cys65–Cys138, Cys66–Cys104, Cys73–Cys97, and Cys91–Cys102. Ca(2+)-binding residues include Tyr43, Gly45, and Gly47. Residue His63 is part of the active site. Asp64 contacts Ca(2+). The active site involves Asp105.

The protein belongs to the phospholipase A2 family. Group II subfamily. D49 sub-subfamily. The cofactor is Ca(2+). In terms of tissue distribution, expressed by the venom gland.

The protein resides in the secreted. It carries out the reaction a 1,2-diacyl-sn-glycero-3-phosphocholine + H2O = a 1-acyl-sn-glycero-3-phosphocholine + a fatty acid + H(+). In terms of biological role, exhibits high hydrolytic activities and shows strong preference for the anionic micelles (dPPC with deoxycholate) to the zwitterionic micelles (dPPC with Triton X-100). PLA2 catalyzes the calcium-dependent hydrolysis of the 2-acyl groups in 3-sn-phosphoglycerides. This chain is Acidic phospholipase A2 DsM-a2/DsM-a2', found in Daboia siamensis (Eastern Russel's viper).